The chain runs to 325 residues: Acetyl-coenzyme A carboxylase carboxyl transferase subunit alpha (325 aa).

Positions 35–292 (EIEKLEARLA…DKVLKRSLKQ (258 aa)) constitute a CoA carboxyltransferase C-terminal domain.

The protein belongs to the AccA family. In terms of assembly, acetyl-CoA carboxylase is a heterohexamer composed of biotin carboxyl carrier protein (AccB), biotin carboxylase (AccC) and two subunits each of ACCase subunit alpha (AccA) and ACCase subunit beta (AccD).

It is found in the cytoplasm. The enzyme catalyses N(6)-carboxybiotinyl-L-lysyl-[protein] + acetyl-CoA = N(6)-biotinyl-L-lysyl-[protein] + malonyl-CoA. It participates in lipid metabolism; malonyl-CoA biosynthesis; malonyl-CoA from acetyl-CoA: step 1/1. Functionally, component of the acetyl coenzyme A carboxylase (ACC) complex. First, biotin carboxylase catalyzes the carboxylation of biotin on its carrier protein (BCCP) and then the CO(2) group is transferred by the carboxyltransferase to acetyl-CoA to form malonyl-CoA. This chain is Acetyl-coenzyme A carboxylase carboxyl transferase subunit alpha, found in Geobacillus sp. (strain WCH70).